The sequence spans 858 residues: Cone cGMP-specific 3',5'-cyclic phosphodiesterase subunit alpha' (858 aa).

GAF domains are found at residues 75-224 and 256-433; these read TPEQ…SIIL and DVER…GWSL. 3',5'-cyclic GMP-binding positions include S97, D116, 169 to 172, and T176; that span reads DKQT. The PDEase domain occupies 486-819; sequence EEKQLVAILK…VEWKSLADEY (334 aa). The Proton donor role is filled by H562. A divalent metal cation is bound by residues H566, H602, D603, and D723. Residues 830-852 are compositionally biased toward basic and acidic residues; the sequence is AKKQEGGAEKAAEDSGGGDDKKS. The segment at 830-858 is disordered; sequence AKKQEGGAEKAAEDSGGGDDKKSKTCLML. C855 is modified (cysteine methyl ester). Residue C855 is the site of S-geranylgeranyl cysteine attachment. Positions 856–858 are cleaved as a propeptide — removed in mature form; it reads LML.

It belongs to the cyclic nucleotide phosphodiesterase family. Composed of two alpha' subunits that are associated with 3 smaller proteins of 11, 13, and 15 kDa. A divalent metal cation serves as cofactor.

It localises to the cell membrane. The catalysed reaction is 3',5'-cyclic GMP + H2O = GMP + H(+). Functionally, as cone-specific cGMP phosphodiesterase, it plays an essential role in light detection and cone phototransduction by rapidly decreasing intracellular levels of cGMP. The sequence is that of Cone cGMP-specific 3',5'-cyclic phosphodiesterase subunit alpha' (PDE6C) from Homo sapiens (Human).